The chain runs to 637 residues: Chaperone protein DnaK (637 aa).

Threonine 198 bears the Phosphothreonine; by autocatalysis mark. A disordered region spans residues methionine 597–lysine 637. The segment covering glutamine 600–glycine 610 has biased composition (polar residues). Residues glutamine 620 to phenylalanine 629 are compositionally biased toward acidic residues.

It belongs to the heat shock protein 70 family.

In terms of biological role, acts as a chaperone. This chain is Chaperone protein DnaK, found in Desulforapulum autotrophicum (strain ATCC 43914 / DSM 3382 / VKM B-1955 / HRM2) (Desulfobacterium autotrophicum).